Consider the following 262-residue polypeptide: Phosphomannomutase 1 (262 aa).

Residue Ala2 is modified to N-acetylalanine. Asp19 serves as the catalytic Nucleophile. Mg(2+) contacts are provided by Asp19 and Asp21. Asp21 acts as the Proton donor/acceptor in catalysis. The alpha-D-mannose 1-phosphate site is built by Arg28, Arg132, Arg143, Arg150, Met186, Ser188, and Asp190. Mg(2+)-binding residues include Asn218, Phe230, Asp232, and Thr235. Ser242 is modified (phosphoserine).

The protein belongs to the eukaryotic PMM family. Homodimer. Requires Mg(2+) as cofactor. As to expression, strong expression in liver, heart, brain, and pancreas; lower expression in skeletal muscle.

It is found in the cytoplasm. It carries out the reaction alpha-D-mannose 1-phosphate = D-mannose 6-phosphate. The protein operates within nucleotide-sugar biosynthesis; GDP-alpha-D-mannose biosynthesis; alpha-D-mannose 1-phosphate from D-fructose 6-phosphate: step 2/2. Its activity is regulated as follows. IMP, a metabolite whose concentration is elevated in anoxia, inhibits phosphomannomutase and phosphoglucomutase activities and strongly enhances glucose-1,6-bisphosphatase activity. Its function is as follows. Involved in the synthesis of the GDP-mannose and dolichol-phosphate-mannose required for a number of critical mannosyl transfer reactions. In addition, may be responsible for the degradation of glucose-1,6-bisphosphate in ischemic brain. The chain is Phosphomannomutase 1 (PMM1) from Homo sapiens (Human).